The following is a 473-amino-acid chain: Xylosidase/arabinosidase (473 aa).

The active-site Proton acceptor is D18. The Proton donor role is filled by E209.

The protein belongs to the glycosyl hydrolase 43 family. Homotetramer.

The catalysed reaction is Hydrolysis of (1-&gt;4)-beta-D-xylans, to remove successive D-xylose residues from the non-reducing termini.. It carries out the reaction Hydrolysis of terminal non-reducing alpha-L-arabinofuranoside residues in alpha-L-arabinosides.. This is Xylosidase/arabinosidase (xylA) from Thermoclostridium stercorarium (Clostridium stercorarium).